A 140-amino-acid chain; its full sequence is Nucleoside diphosphate kinase (140 aa).

ATP is bound by residues lysine 11, phenylalanine 59, arginine 87, threonine 93, arginine 104, and asparagine 114. The active-site Pros-phosphohistidine intermediate is histidine 117.

It belongs to the NDK family. Homotetramer. The cofactor is Mg(2+).

It localises to the cytoplasm. It catalyses the reaction a 2'-deoxyribonucleoside 5'-diphosphate + ATP = a 2'-deoxyribonucleoside 5'-triphosphate + ADP. The enzyme catalyses a ribonucleoside 5'-diphosphate + ATP = a ribonucleoside 5'-triphosphate + ADP. Major role in the synthesis of nucleoside triphosphates other than ATP. The ATP gamma phosphate is transferred to the NDP beta phosphate via a ping-pong mechanism, using a phosphorylated active-site intermediate. The polypeptide is Nucleoside diphosphate kinase (Rhodopseudomonas palustris (strain ATCC BAA-98 / CGA009)).